A 214-amino-acid chain; its full sequence is Probable transaldolase (214 aa).

Lys-83 acts as the Schiff-base intermediate with substrate in catalysis.

It belongs to the transaldolase family. Type 3B subfamily.

The protein resides in the cytoplasm. It carries out the reaction D-sedoheptulose 7-phosphate + D-glyceraldehyde 3-phosphate = D-erythrose 4-phosphate + beta-D-fructose 6-phosphate. Its pathway is carbohydrate degradation; pentose phosphate pathway; D-glyceraldehyde 3-phosphate and beta-D-fructose 6-phosphate from D-ribose 5-phosphate and D-xylulose 5-phosphate (non-oxidative stage): step 2/3. Its function is as follows. Transaldolase is important for the balance of metabolites in the pentose-phosphate pathway. This chain is Probable transaldolase, found in Dictyoglomus turgidum (strain DSM 6724 / Z-1310).